We begin with the raw amino-acid sequence, 1052 residues long: MSSAAEPPPPPPPESAPSKPAASIASGGSNSSNKGGPEGVAAQAVASAASAGPADAEMEEIFDDASPGKQKEIQEPDPTYEEKMQTDRANRFEYLLKQTELFAHFIQPAAQKTPTSPLKMKPGRPRIKKDEKQNLLSVGDYRHRRTEQEEDEELLTESSKATNVCTRFEDSPSYVKWGKLRDYQVRGLNWLISLYENGINGILADEMGLGKTLQTISLLGYMKHYRNIPGPHMVLVPKSTLHNWMSEFKRWVPTLRSVCLIGDKEQRAAFVRDVLLPGEWDVCVTSYEMLIKEKSVFKKFNWRYLVIDEAHRIKNEKSKLSEIVREFKTTNRLLLTGTPLQNNLHELWSLLNFLLPDVFNSADDFDSWFDTNNCLGDQKLVERLHMVLRPFLLRRIKADVEKSLPPKKEVKIYVGLSKMQREWYTRILMKDIDILNSAGKMDKMRLLNILMQLRKCCNHPYLFDGAEPGPPYTTDMHLVTNSGKMVVLDKLLPKLKEQGSRVLIFSQMTRVLDILEDYCMWRNYEYCRLDGQTPHDERQDSINAYNEPNSTKFVFMLSTRAGGLGINLATADVVILYDSDWNPQVDLQAMDRAHRIGQTKTVRVFRFITDNTVEERIVERAEMKLRLDSIVIQQGRLVDQNLNKIGKDEMLQMIRHGATHVFASKESEITDEDIDGILERGAKKTAEMNEKLSKMGESSLRNFTMDTESSVYNFEGEDYREKQKIAFTEWIEPPKRERKANYAVDAYFREALRVSEPKAPKAPRPPKQPNVQDFQFFPPRLFELLEKEILFYRKTIGYKVPRNPELPNAAQAQKEEQLKIDEAESLNDEELEEKEKLLTQGFTNWNKRDFNQFIKANEKWGRDDIENIAREVEGKTPEEVIEYSAVFWERCNELQDIEKIMAQIERGEARIQRRISIKKALDTKIGRYKAPFHQLRISYGTNKGKNYTEEEDRFLICMLHKLGFDKENVYDELRQCIRNSPQFRFDWFLKSRTAMELQRRCNTLITLIERENMELEEKEKAEKKKRGPKPSTQKRKMDGAPDGRGRKKKLKL.

The span at 1–15 shows a compositional bias: pro residues; it reads MSSAAEPPPPPPPES. A disordered region spans residues 1–83; sequence MSSAAEPPPP…QEPDPTYEEK (83 aa). At Ser2 the chain carries N-acetylserine. A compositionally biased stretch (low complexity) spans 16–55; that stretch reads APSKPAASIASGGSNSSNKGGPEGVAAQAVASAASAGPAD. A Phosphoserine modification is found at Ser66. Over residues 69-83 the composition is skewed to basic and acidic residues; sequence KQKEIQEPDPTYEEK. Lys83 is covalently cross-linked (Glycyl lysine isopeptide (Lys-Gly) (interchain with G-Cter in SUMO2)). Thr113 carries the post-translational modification Phosphothreonine. Ser116, Ser137, and Ser171 each carry phosphoserine. Residues 192 to 357 form the Helicase ATP-binding domain; it reads ISLYENGING…WSLLNFLLPD (166 aa). 205 to 212 serves as a coordination point for ATP; it reads DEMGLGKT. A DEAH box motif is present at residues 308–311; that stretch reads DEAH. N6-acetyllysine is present on Lys440. Positions 487–638 constitute a Helicase C-terminal domain; that stretch reads VLDKLLPKLK…SIVIQQGRLV (152 aa). Residues Lys644, Lys647, Lys694, Lys722, and Lys735 each participate in a glycyl lysine isopeptide (Lys-Gly) (interchain with G-Cter in SUMO2) cross-link. Phosphoserine occurs at positions 755 and 825. 2 SANT domains span residues 840–892 and 943–1007; these read QGFT…ERCN and KGKN…LITL. Lys966 is covalently cross-linked (Glycyl lysine isopeptide (Lys-Gly) (interchain with G-Cter in SUMO2)). The segment at 1015–1052 is disordered; it reads LEEKEKAEKKKRGPKPSTQKRKMDGAPDGRGRKKKLKL. A compositionally biased stretch (basic residues) spans 1023-1034; it reads KKKRGPKPSTQK. Residues 1035-1044 show a composition bias toward basic and acidic residues; it reads RKMDGAPDGR.

Belongs to the SNF2/RAD54 helicase family. ISWI subfamily. As to quaternary structure, component of the ACF-5 ISWI chromatin-remodeling complex (also called the ACF/WCRF complex) at least composed of SMARCA5/SNF2H and BAZ1A/ACF1, which regulates the spacing of histone octamers on the DNA template to facilitate access to DNA. Within the complex interacts with BAZ1A/ACF1; the interaction is direct and is required to slide nucleosomes from end to center positions on a DNA template in an ATP-dependent manner. Component of the CHRAC ISWI chromatin-remodeling complex at least composed of SMARCA5/SNF2H, BAZ1A/ACF1, CHRAC1 and POLE3; the complex preferentially binds DNA through the CHRAC1-POLE3 heterodimer and possesses ATP-dependent nucleosome-remodeling activity. Within the complex interacts with BAZ1A/ACF1; the interaction is direct and promotes the interaction with the POLE3-CHRAC1 heterodimer. Within the complex interacts with the POLE3-CHRAC1 heterodimer; the interaction is direct and enhances nucleosome sliding activity by the SMARCA5/SNF2H and BAZ1A/ACF1 interaction. Neither POLE3 nor CHRAC1 enhances nucleosome sliding activity of the ACF-5 ISWI chromatin remodeling complex. Component of the WICH-5 ISWI chromatin-remodeling complex (also called the WICH complex) at least composed of SMARCA5/SNF2H and BAZ1B/WSTF, which regulates the spacing of histone octamers on the DNA template to facilitate access to DNA. Within the complex interacts with BAZ1B/WSTF. Component of the NoRC-5 ISWI chromatin-remodeling complex (also called the NoRC chromatin-remodeling complex) at least composed of SMARCA5/SNF2H and BAZ2A/TIP5; the complex suppresses rDNA transcription by a combination of nucleosome remodeling, histone deacetylation, and DNA methylation. Within the complex interacts with BAZ2A/TIP5. Within the complex interacts with HDAC1. Component of the BRF-5 ISWI chromatin-remodeling complex at least composed of SMARCA5/SNF2H and BAZ2B. Within the complex interacts with BAZ2B. Component of the NURF-5 ISWI chromatin-remodeling complex at least composed of SMARCA5/SNF2H and BPTF. Within the complex interacts with BPFT. Component of the CERF-5 ISWI chromatin-remodeling complex at least composed of SMARCA5/SNF2H and CECR2. LUZP1 is detected as part of the CERF-5 complex in embryonic stem cells where it is involved in complex stabilization but is not detected in the complex in the testis. Within the complex interacts with CECR2. Component of the RSF-5 ISWI chromatin-remodeling complex (also called the RSF complex) at least composed of SMARCA5/SNF2H and RSF1. Within the complex interacts with RSF1. Interacts with the cohesin complex component RAD21; the interaction is direct. Interacts with the NuRD complex components HDAC2, RBBP4 and CHD4; the interactions are direct. Interacts with PCNA. Component of the B-WICH complex, at least composed of SMARCA5/SNF2H, BAZ1B/WSTF, SF3B1, DEK, MYO1C, ERCC6, MYBBP1A and DDX21 which positively regulates RNA polymerase III transcription. Interacts with MYO1C. Interacts with BEND3. Interacts with SIRT6; promoting recruitment to DNA damage sites. (Microbial infection) Interacts with JC virus small t antigen. In terms of assembly, (Microbial infection) Interacts with Epstein Barr virus (EBV) lytic switch protein BZLF1; this interaction participates to the activation of early lytic viral genes by BZLF1. As to expression, ubiquitously expressed.

The protein resides in the nucleus. It localises to the chromosome. It catalyses the reaction ATP + H2O = ADP + phosphate + H(+). In terms of biological role, ATPase that possesses intrinsic ATP-dependent nucleosome-remodeling activity. Catalytic subunit of ISWI chromatin-remodeling complexes, which form ordered nucleosome arrays on chromatin and facilitate access to DNA during DNA-templated processes such as DNA replication, transcription, and repair; this may require intact histone H4 tails. Within the ISWI chromatin-remodeling complexes, slides edge- and center-positioned histone octamers away from their original location on the DNA template. Catalytic activity and histone octamer sliding propensity is regulated and determined by components of the ISWI chromatin-remodeling complexes. The BAZ1A/ACF1-, BAZ1B/WSTF-, BAZ2A/TIP5- and BAZ2B-containing ISWI chromatin-remodeling complexes regulate the spacing of nucleosomes along the chromatin and have the ability to slide mononucleosomes to the center of a DNA template in an ATP-dependent manner. The CECR2- and RSF1-containing ISWI chromatin-remodeling complexes do not have the ability to slide mononucleosomes to the center of a DNA template. Binds to core histones together with RSF1, and is required for the assembly of regular nucleosome arrays by the RSF-5 ISWI chromatin-remodeling complex. Involved in DNA replication and together with BAZ1A/ACF1 is required for replication of pericentric heterochromatin in S-phase. Probably plays a role in repression of RNA polymerase I dependent transcription of the rDNA locus, through the recruitment of the SIN3/HDAC1 corepressor complex to the rDNA promoter. Essential component of the WICH-5 ISWI chromatin-remodeling complex (also called the WICH complex), a chromatin-remodeling complex that mobilizes nucleosomes and reconfigures irregular chromatin to a regular nucleosomal array structure. The WICH-5 ISWI chromatin-remodeling complex regulates the transcription of various genes, has a role in RNA polymerase I transcription. Within the B-WICH complex has a role in RNA polymerase III transcription. Mediates the histone H2AX phosphorylation at 'Tyr-142', and is involved in the maintenance of chromatin structures during DNA replication processes. Essential component of NoRC-5 ISWI chromatin-remodeling complex, a complex that mediates silencing of a fraction of rDNA by recruiting histone-modifying enzymes and DNA methyltransferases, leading to heterochromatin formation and transcriptional silencing. This Homo sapiens (Human) protein is SWI/SNF-related matrix-associated actin-dependent regulator of chromatin subfamily A member 5.